A 605-amino-acid polypeptide reads, in one-letter code: Inactive LRR receptor-like serine/threonine-protein kinase BIR2 (605 aa).

The signal sequence occupies residues 1-28 (MKEIGSKPRKLLPLCFIIFLCFCSSVMA). Residues 29 to 229 (ADEDDIRCLR…CGGLSKKNLG (201 aa)) lie on the Extracellular side of the membrane. N-linked (GlcNAc...) asparagine glycosylation occurs at Asn-58. LRR repeat units lie at residues 101–125 (CASL…LCNW), 127–150 (PFLV…LAKC), 152–173 (FVNS…QFSA), and 174–197 (LGRL…FFSS). A helical transmembrane segment spans residues 230-250 (IIIAAGVFGAAASMLLAFGIW). Over 251–605 (WYYHLKWTRR…IFDTQENEKV (355 aa)) the chain is Cytoplasmic. Ser-271 carries the phosphoserine; by BAK1 modification. At Thr-283 the chain carries Phosphothreonine; by BAK1. Position 286 is a phosphoserine; by BAK1 (Ser-286). The residue at position 304 (Thr-304) is a Phosphothreonine; by BAK1. The 272-residue stretch at 307 to 578 (FNSENIIVST…FQAYQSLKAI (272 aa)) folds into the Protein kinase domain. 313–321 (IVSTRTGTT) lines the ATP pocket. The residue at position 330 (Ser-330) is a Phosphoserine; by BAK1. Position 335 (Lys-335) interacts with ATP. At Ser-389 the chain carries Phosphoserine; by BAK1. Phosphothreonine is present on Thr-402. 2 positions are modified to phosphoserine; by BAK1: Ser-448 and Ser-462. Residue Thr-466 is modified to Phosphothreonine; by BAK1. Residue Tyr-479 is modified to Phosphotyrosine. A Phosphothreonine modification is found at Thr-482. The residue at position 486 (Ser-486) is a Phosphoserine. The residue at position 533 (Thr-533) is a Phosphothreonine; by BAK1.

This sequence belongs to the protein kinase superfamily. Ser/Thr protein kinase family. Interacts constitutively with BAK1, when phosphorylated, thereby preventing interaction with the ligand-binding LRR-RLK FLS2. Upon infection, pathogen-associated molecular patterns (PAMP) perception leads to BIR2 release from the BAK1 complex and enables the recruitment of BAK1 into the FLS2 complex. Phosphorylated by BAK1, this interacts promotes interaction with BAK1.

It is found in the cell membrane. Its function is as follows. Pseudokinases lacking protein kinase activity and unable to bind ATP-analogs. Negative regulator of pathogen-associated molecular patterns- (PAMP-) triggered immunity by limiting BAK1-receptor complex formation in the absence of ligands. The sequence is that of Inactive LRR receptor-like serine/threonine-protein kinase BIR2 from Arabidopsis thaliana (Mouse-ear cress).